A 596-amino-acid chain; its full sequence is Chloride intracellular channel protein 6 (596 aa).

The tract at residues 1-360 (MAEATEPKEV…ALEEGDPGQE (360 aa)) is disordered. Basic and acidic residues predominate over residues 34–48 (LEGREASEEAAEAPR). Ser40 bears the Phosphoserine mark. Gly residues predominate over residues 65-74 (GCGQDEGTGG). Residues 83–98 (GPEAETPGASGAPGEA) are compositionally biased toward low complexity. Residues 118–130 (SAQQVQGMSSGLD) are compositionally biased toward polar residues. Residues 148–160 (DPTASEAGEEAES) show a composition bias toward acidic residues. Low complexity-rich tracts occupy residues 197–213 (GSES…PQPQ) and 225–244 (GGNE…AGEG). Residues 246–290 (TLGKDGSEEAASEDARVDAHENGDQGKLQEETGEEEARPEPELKG) are compositionally biased toward basic and acidic residues. The residue at position 304 (Ser304) is a Phosphoserine. Over residues 338–348 (ELGRVNGRREN) the composition is skewed to basic and acidic residues. The G-site signature appears at 379–382 (CPFS). Residues 381–401 (FSQRLFMILWLKGVIFNVTTV) traverse the membrane as a helical segment. The GST C-terminal domain occupies 425-596 (DGEVKTDVNK…AYSDAAKRMK (172 aa)).

The protein belongs to the chloride channel CLIC family. As to quaternary structure, monomer (soluble state). Interacts with dopamine receptors DRD2, DRD3 and DRD4. In terms of processing, phosphorylated.

The protein localises to the cytoplasm. It is found in the cell membrane. It catalyses the reaction chloride(in) = chloride(out). Its activity is regulated as follows. Channel activity is redox- and pH-regulated. Inhibited by IAA-94. In terms of biological role, in the soluble state, catalyzes glutaredoxin-like thiol disulfide exchange reactions with reduced glutathione as electron donor. Can insert into membranes and form voltage-dependent chloride-selective channels. The channel opens upon membrane depolarization at positive voltages and closes at negative membrane voltages. May play a critical role in water-secreting cells, possibly through the regulation of chloride ion transport. The protein is Chloride intracellular channel protein 6 (Clic6) of Mus musculus (Mouse).